The sequence spans 1573 residues: Pentafunctional AROM polypeptide 1 (1573 aa).

Positions 1–380 (MAEPTKISIL…YEPKASVVSN (380 aa)) are 3-dehydroquinate synthase. Residues 44–46 (DTN), 81–84 (ENSK), 112–114 (GGV), and aspartate 117 each bind NAD(+). Arginine 128 serves as a coordination point for 7-phospho-2-dehydro-3-deoxy-D-arabino-heptonate. 137–138 (TT) lines the NAD(+) pocket. 7-phospho-2-dehydro-3-deoxy-D-arabino-heptonate is bound by residues aspartate 144 and lysine 150. Lysine 159 contacts NAD(+). Asparagine 160 is a binding site for 7-phospho-2-dehydro-3-deoxy-D-arabino-heptonate. Residues 177-180 (FIDT) and asparagine 188 contribute to the NAD(+) site. Glutamate 192 contributes to the Zn(2+) binding site. 7-phospho-2-dehydro-3-deoxy-D-arabino-heptonate-binding positions include 192-195 (EVIK) and lysine 246. The active-site Proton acceptor; for 3-dehydroquinate synthase activity is glutamate 256. Residues 260–264 (RNLLN) and histidine 267 contribute to the 7-phospho-2-dehydro-3-deoxy-D-arabino-heptonate site. Zn(2+) is bound at residue histidine 267. Histidine 271 functions as the Proton acceptor; for 3-dehydroquinate synthase activity in the catalytic mechanism. 7-phospho-2-dehydro-3-deoxy-D-arabino-heptonate contacts are provided by histidine 283 and lysine 352. Histidine 283 contributes to the Zn(2+) binding site. Residues 393 to 838 (VIPGVPKDLN…WDALKQKFGV (446 aa)) form an EPSP synthase region. The For EPSP synthase activity role is filled by cysteine 820. Residues 859 to 1051 (DASIVIIGMR…RRKRLSFFMS (193 aa)) are shikimate kinase. 866-873 (GMRGAGKT) contacts ATP. Residues 1052–1273 (LTLTDLRDSG…AAPGQLSAAE (222 aa)) form a 3-dehydroquinase region. Histidine 1175 serves as the catalytic Proton acceptor; for 3-dehydroquinate dehydratase activity. Lysine 1203 serves as the catalytic Schiff-base intermediate with substrate; for 3-dehydroquinate dehydratase activity. The interval 1286-1573 (AKKFAIFGKP…NAVLGTDETK (288 aa)) is shikimate dehydrogenase.

It in the N-terminal section; belongs to the sugar phosphate cyclases superfamily. Dehydroquinate synthase family. This sequence in the 2nd section; belongs to the EPSP synthase family. In the 3rd section; belongs to the shikimate kinase family. The protein in the 4th section; belongs to the type-I 3-dehydroquinase family. It in the C-terminal section; belongs to the shikimate dehydrogenase family. In terms of assembly, homodimer. Zn(2+) serves as cofactor.

The protein resides in the cytoplasm. It catalyses the reaction 7-phospho-2-dehydro-3-deoxy-D-arabino-heptonate = 3-dehydroquinate + phosphate. The enzyme catalyses 3-dehydroquinate = 3-dehydroshikimate + H2O. The catalysed reaction is shikimate + NADP(+) = 3-dehydroshikimate + NADPH + H(+). It carries out the reaction shikimate + ATP = 3-phosphoshikimate + ADP + H(+). It catalyses the reaction 3-phosphoshikimate + phosphoenolpyruvate = 5-O-(1-carboxyvinyl)-3-phosphoshikimate + phosphate. It functions in the pathway metabolic intermediate biosynthesis; chorismate biosynthesis; chorismate from D-erythrose 4-phosphate and phosphoenolpyruvate: step 2/7. It participates in metabolic intermediate biosynthesis; chorismate biosynthesis; chorismate from D-erythrose 4-phosphate and phosphoenolpyruvate: step 3/7. The protein operates within metabolic intermediate biosynthesis; chorismate biosynthesis; chorismate from D-erythrose 4-phosphate and phosphoenolpyruvate: step 4/7. Its pathway is metabolic intermediate biosynthesis; chorismate biosynthesis; chorismate from D-erythrose 4-phosphate and phosphoenolpyruvate: step 5/7. It functions in the pathway metabolic intermediate biosynthesis; chorismate biosynthesis; chorismate from D-erythrose 4-phosphate and phosphoenolpyruvate: step 6/7. Functionally, the AROM polypeptide catalyzes 5 consecutive enzymatic reactions in prechorismate polyaromatic amino acid biosynthesis. This chain is Pentafunctional AROM polypeptide 1, found in Talaromyces marneffei (strain ATCC 18224 / CBS 334.59 / QM 7333) (Penicillium marneffei).